A 261-amino-acid polypeptide reads, in one-letter code: Cytochrome c oxidase subunit 3 (261 aa).

Topologically, residues 1–15 (MAHQAHSYHMVDPSP) are mitochondrial matrix. A helical transmembrane segment spans residues 16 to 34 (WPIFGAAAALLTTSGLIMW). Residues 35 to 40 (FHYSST) lie on the Mitochondrial intermembrane side of the membrane. A helical membrane pass occupies residues 41 to 66 (TLLTMGLLSMLLVMLQWWRDVVREST). The Mitochondrial matrix portion of the chain corresponds to 67 to 72 (FQGHHT). A helical transmembrane segment spans residues 73–105 (PTVQKGLRYGMILFITSEAFFFLGFFWAFFHSS). Residues 106-128 (LAPTPELGGQWPPTGVKPLNPLE) are Mitochondrial intermembrane-facing. A helical transmembrane segment spans residues 129-152 (VPLLNTAILLASGVTVTWAHHSIT). Over 153-155 (EGN) the chain is Mitochondrial matrix. A helical membrane pass occupies residues 156–183 (RKQAIHALTLTILLGFYFTALQAMEYHE). The Mitochondrial intermembrane segment spans residues 184–190 (ASFSIAD). The helical transmembrane segment at 191–223 (SVYGSTFFVATGFHGLHVIIGSSFLTVCLLRLI) threads the bilayer. The Mitochondrial matrix segment spans residues 224–232 (KFHFTPNHH). Residues 233–256 (FGFEAAAWYWHFVDIIWLFLYMSM) traverse the membrane as a helical segment. At 257–261 (YWWGS) the chain is on the mitochondrial intermembrane side.

This sequence belongs to the cytochrome c oxidase subunit 3 family. In terms of assembly, component of the cytochrome c oxidase (complex IV, CIV), a multisubunit enzyme composed of 14 subunits. The complex is composed of a catalytic core of 3 subunits MT-CO1, MT-CO2 and MT-CO3, encoded in the mitochondrial DNA, and 11 supernumerary subunits COX4I, COX5A, COX5B, COX6A, COX6B, COX6C, COX7A, COX7B, COX7C, COX8 and NDUFA4, which are encoded in the nuclear genome. The complex exists as a monomer or a dimer and forms supercomplexes (SCs) in the inner mitochondrial membrane with NADH-ubiquinone oxidoreductase (complex I, CI) and ubiquinol-cytochrome c oxidoreductase (cytochrome b-c1 complex, complex III, CIII), resulting in different assemblies (supercomplex SCI(1)III(2)IV(1) and megacomplex MCI(2)III(2)IV(2)).

Its subcellular location is the mitochondrion inner membrane. The enzyme catalyses 4 Fe(II)-[cytochrome c] + O2 + 8 H(+)(in) = 4 Fe(III)-[cytochrome c] + 2 H2O + 4 H(+)(out). Its function is as follows. Component of the cytochrome c oxidase, the last enzyme in the mitochondrial electron transport chain which drives oxidative phosphorylation. The respiratory chain contains 3 multisubunit complexes succinate dehydrogenase (complex II, CII), ubiquinol-cytochrome c oxidoreductase (cytochrome b-c1 complex, complex III, CIII) and cytochrome c oxidase (complex IV, CIV), that cooperate to transfer electrons derived from NADH and succinate to molecular oxygen, creating an electrochemical gradient over the inner membrane that drives transmembrane transport and the ATP synthase. Cytochrome c oxidase is the component of the respiratory chain that catalyzes the reduction of oxygen to water. Electrons originating from reduced cytochrome c in the intermembrane space (IMS) are transferred via the dinuclear copper A center (CU(A)) of subunit 2 and heme A of subunit 1 to the active site in subunit 1, a binuclear center (BNC) formed by heme A3 and copper B (CU(B)). The BNC reduces molecular oxygen to 2 water molecules using 4 electrons from cytochrome c in the IMS and 4 protons from the mitochondrial matrix. In Gallus gallus (Chicken), this protein is Cytochrome c oxidase subunit 3 (MT-CO3).